Here is a 1085-residue protein sequence, read N- to C-terminus: DNA repair and recombination protein RAD26 (1085 aa).

A Phosphoserine modification is found at Ser30. Disordered stretches follow at residues 118 to 141 (KEQVDQGAENKGSKEGLQRPGETE) and 190 to 219 (NLTDEDDNLSDQDYQMSGKESEDDEEEEND). Residues 128–141 (KGSKEGLQRPGETE) show a composition bias toward basic and acidic residues. Over residues 210-219 (SEDDEEEEND) the composition is skewed to acidic residues. The 210-residue stretch at 309 to 518 (YELYQQNCGG…WSLFDFIFPG (210 aa)) folds into the Helicase ATP-binding domain. Residue 322–329 (DEMGLGKT) coordinates ATP. Residues 469–472 (DEGH) carry the DEGH box motif. In terms of domain architecture, Helicase C-terminal spans 655-818 (VVKQLLLLWH…KRFFKIHELH (164 aa)).

This sequence belongs to the SNF2/RAD54 helicase family.

The protein resides in the nucleus. The enzyme catalyses ATP + H2O = ADP + phosphate + H(+). May be involved in the preferential repair of active genes. In Saccharomyces cerevisiae (strain ATCC 204508 / S288c) (Baker's yeast), this protein is DNA repair and recombination protein RAD26 (RAD26).